A 320-amino-acid polypeptide reads, in one-letter code: Putative malonate transporter (320 aa).

The next 8 helical transmembrane spans lie at 1 to 21, 32 to 52, 65 to 85, 113 to 133, 167 to 187, 196 to 216, 256 to 276, and 289 to 309; these read MAEI…GYLT, MGWL…FKLV, FILT…AIGL, GLAL…IFCF, IAFH…FLSF, LIDY…GVTL, IWVQ…VFVI, and ATIL…LYLI.

Belongs to the auxin efflux carrier (TC 2.A.69) family.

Its subcellular location is the cell membrane. In Rhizobium meliloti (strain 1021) (Ensifer meliloti), this protein is Putative malonate transporter (mdcF).